The sequence spans 398 residues: Arginine biosynthesis bifunctional protein ArgJ (398 aa).

Positions 148, 174, 185, 271, 393, and 398 each coordinate substrate. Thr-185 (nucleophile) is an active-site residue.

This sequence belongs to the ArgJ family. Heterotetramer of two alpha and two beta chains.

It is found in the cytoplasm. It carries out the reaction N(2)-acetyl-L-ornithine + L-glutamate = N-acetyl-L-glutamate + L-ornithine. It catalyses the reaction L-glutamate + acetyl-CoA = N-acetyl-L-glutamate + CoA + H(+). It functions in the pathway amino-acid biosynthesis; L-arginine biosynthesis; L-ornithine and N-acetyl-L-glutamate from L-glutamate and N(2)-acetyl-L-ornithine (cyclic): step 1/1. The protein operates within amino-acid biosynthesis; L-arginine biosynthesis; N(2)-acetyl-L-ornithine from L-glutamate: step 1/4. Its function is as follows. Catalyzes two activities which are involved in the cyclic version of arginine biosynthesis: the synthesis of N-acetylglutamate from glutamate and acetyl-CoA as the acetyl donor, and of ornithine by transacetylation between N(2)-acetylornithine and glutamate. This chain is Arginine biosynthesis bifunctional protein ArgJ, found in Listeria monocytogenes serotype 4b (strain F2365).